We begin with the raw amino-acid sequence, 174 residues long: Bifunctional protein PyrR (174 aa).

Substrate is bound by residues 38 to 39 (SG), 95 to 103 (DDVLATGRT), and Arg-128. Residues 91–103 (ILLVDDVLATGRT) carry the PRPP-binding motif.

Belongs to the purine/pyrimidine phosphoribosyltransferase family. PyrR subfamily.

The catalysed reaction is UMP + diphosphate = 5-phospho-alpha-D-ribose 1-diphosphate + uracil. In terms of biological role, regulates the transcription of the pyrimidine nucleotide (pyr) operon in response to exogenous pyrimidines. Also displays a weak uracil phosphoribosyltransferase activity which is not physiologically significant. The polypeptide is Bifunctional protein PyrR (Ralstonia nicotianae (strain ATCC BAA-1114 / GMI1000) (Ralstonia solanacearum)).